The sequence spans 256 residues: tRNA (guanine-N(7)-)-methyltransferase (256 aa).

Residues glutamate 85, glutamate 110, aspartate 137, and aspartate 159 each coordinate S-adenosyl-L-methionine. The active site involves aspartate 159. Residues lysine 163 and aspartate 195 each contribute to the substrate site.

Belongs to the class I-like SAM-binding methyltransferase superfamily. TrmB family.

The catalysed reaction is guanosine(46) in tRNA + S-adenosyl-L-methionine = N(7)-methylguanosine(46) in tRNA + S-adenosyl-L-homocysteine. It functions in the pathway tRNA modification; N(7)-methylguanine-tRNA biosynthesis. In terms of biological role, catalyzes the formation of N(7)-methylguanine at position 46 (m7G46) in tRNA. This chain is tRNA (guanine-N(7)-)-methyltransferase, found in Rhodopseudomonas palustris (strain HaA2).